Reading from the N-terminus, the 185-residue chain is Ribosome-recycling factor (185 aa).

It belongs to the RRF family.

It localises to the cytoplasm. Functionally, responsible for the release of ribosomes from messenger RNA at the termination of protein biosynthesis. May increase the efficiency of translation by recycling ribosomes from one round of translation to another. The polypeptide is Ribosome-recycling factor (Shewanella baltica (strain OS185)).